The chain runs to 712 residues: DNA ligase (712 aa).

Residues 53 to 57, 103 to 104, and glutamate 133 contribute to the NAD(+) site; these read DAEFD and SL. Lysine 135 serves as the catalytic N6-AMP-lysine intermediate. Arginine 156, glutamate 196, lysine 315, and lysine 339 together coordinate NAD(+). Cysteine 433, cysteine 436, cysteine 452, and cysteine 458 together coordinate Zn(2+). The region spanning 622-711 is the BRCT domain; the sequence is SIERTLEGLS…PERDAEDGEP (90 aa).

Belongs to the NAD-dependent DNA ligase family. LigA subfamily. Requires Mg(2+) as cofactor. It depends on Mn(2+) as a cofactor.

The enzyme catalyses NAD(+) + (deoxyribonucleotide)n-3'-hydroxyl + 5'-phospho-(deoxyribonucleotide)m = (deoxyribonucleotide)n+m + AMP + beta-nicotinamide D-nucleotide.. In terms of biological role, DNA ligase that catalyzes the formation of phosphodiester linkages between 5'-phosphoryl and 3'-hydroxyl groups in double-stranded DNA using NAD as a coenzyme and as the energy source for the reaction. It is essential for DNA replication and repair of damaged DNA. The polypeptide is DNA ligase (Mycolicibacterium gilvum (strain PYR-GCK) (Mycobacterium gilvum (strain PYR-GCK))).